A 2890-amino-acid chain; its full sequence is Bifunctional DNA-directed RNA polymerase subunit beta-beta' (2890 aa).

The interval 1–1377 is DNA-directed RNA polymerase subunit beta; it reads MSKKIPLKNR…DINIFGDDVD (1377 aa). The interval 1384–2890 is DNA-directed RNA polymerase subunit beta'; that stretch reads PIMIKEDDRP…LRALEDNSKF (1507 aa). Zn(2+) contacts are provided by Cys-1449, Cys-1451, Cys-1465, and Cys-1468. Asp-1849, Asp-1851, and Asp-1853 together coordinate Mg(2+). Zn(2+) is bound by residues Cys-2179, Cys-2253, Cys-2260, and Cys-2263.

The protein in the N-terminal section; belongs to the RNA polymerase beta chain family. This sequence in the C-terminal section; belongs to the RNA polymerase beta' chain family. In terms of assembly, the RNAP catalytic core consists of 2 alpha, 1 beta/beta' and 1 omega subunit. When a sigma factor is associated with the core the holoenzyme is formed, which can initiate transcription. Mg(2+) is required as a cofactor. Zn(2+) serves as cofactor.

The catalysed reaction is RNA(n) + a ribonucleoside 5'-triphosphate = RNA(n+1) + diphosphate. In terms of biological role, DNA-dependent RNA polymerase catalyzes the transcription of DNA into RNA using the four ribonucleoside triphosphates as substrates. The polypeptide is Bifunctional DNA-directed RNA polymerase subunit beta-beta' (rpoBC) (Helicobacter pylori (strain J99 / ATCC 700824) (Campylobacter pylori J99)).